A 326-amino-acid chain; its full sequence is Probable iron chelatin transport system permease protein jhp_0822 (326 aa).

10 helical membrane-spanning segments follow: residues 7–27, 64–84, 91–111, 113–133, 142–162, 164–184, 187–207, 241–261, 275–295, and 301–321; these read IALA…ESLS, ILAL…QTIL, PFLL…IAVV, SNIA…VLAM, LSLV…AGAI, FFVI…SLSL, YKDC…LFLL, VASA…LVIP, LLLS…VVAK, and DLPV…WLLF.

It belongs to the binding-protein-dependent transport system permease family. FecCD subfamily.

The protein resides in the cell inner membrane. In terms of biological role, part of a binding-protein-dependent transport system for an iron chelatin; probably responsible for the translocation of the substrate across the membrane. The chain is Probable iron chelatin transport system permease protein jhp_0822 from Helicobacter pylori (strain J99 / ATCC 700824) (Campylobacter pylori J99).